We begin with the raw amino-acid sequence, 384 residues long: 8-amino-7-oxononanoate synthase (384 aa).

Position 21 (Arg-21) interacts with substrate. Residue 108 to 109 (GF) participates in pyridoxal 5'-phosphate binding. Substrate is bound at residue His-133. The pyridoxal 5'-phosphate site is built by Ser-179, His-207, and Thr-233. Position 236 is an N6-(pyridoxal phosphate)lysine (Lys-236). Substrate is bound at residue Thr-352.

The protein belongs to the class-II pyridoxal-phosphate-dependent aminotransferase family. BioF subfamily. Homodimer. It depends on pyridoxal 5'-phosphate as a cofactor.

The catalysed reaction is 6-carboxyhexanoyl-[ACP] + L-alanine + H(+) = (8S)-8-amino-7-oxononanoate + holo-[ACP] + CO2. Its pathway is cofactor biosynthesis; biotin biosynthesis. In terms of biological role, catalyzes the decarboxylative condensation of pimeloyl-[acyl-carrier protein] and L-alanine to produce 8-amino-7-oxononanoate (AON), [acyl-carrier protein], and carbon dioxide. The chain is 8-amino-7-oxononanoate synthase from Escherichia coli O9:H4 (strain HS).